The chain runs to 179 residues: Shikimate kinase (179 aa).

14–19 is an ATP binding site; that stretch reads GAGKTT. T18 is a Mg(2+) binding site. Substrate is bound by residues D36, R60, and G82. R120 contributes to the ATP binding site. R139 is a binding site for substrate.

It belongs to the shikimate kinase family. As to quaternary structure, monomer. It depends on Mg(2+) as a cofactor.

The protein resides in the cytoplasm. It carries out the reaction shikimate + ATP = 3-phosphoshikimate + ADP + H(+). It functions in the pathway metabolic intermediate biosynthesis; chorismate biosynthesis; chorismate from D-erythrose 4-phosphate and phosphoenolpyruvate: step 5/7. In terms of biological role, catalyzes the specific phosphorylation of the 3-hydroxyl group of shikimic acid using ATP as a cosubstrate. The polypeptide is Shikimate kinase (Methylococcus capsulatus (strain ATCC 33009 / NCIMB 11132 / Bath)).